Reading from the N-terminus, the 98-residue chain is Large ribosomal subunit protein uL23 (98 aa).

The protein belongs to the universal ribosomal protein uL23 family. Part of the 50S ribosomal subunit. Contacts protein L29, and trigger factor when it is bound to the ribosome.

Functionally, one of the early assembly proteins it binds 23S rRNA. One of the proteins that surrounds the polypeptide exit tunnel on the outside of the ribosome. Forms the main docking site for trigger factor binding to the ribosome. This chain is Large ribosomal subunit protein uL23, found in Clostridium beijerinckii (strain ATCC 51743 / NCIMB 8052) (Clostridium acetobutylicum).